A 131-amino-acid polypeptide reads, in one-letter code: Small ribosomal subunit protein uS8 (131 aa).

This sequence belongs to the universal ribosomal protein uS8 family. Part of the 30S ribosomal subunit. Contacts proteins S5 and S12.

Its function is as follows. One of the primary rRNA binding proteins, it binds directly to 16S rRNA central domain where it helps coordinate assembly of the platform of the 30S subunit. This Chlorobium luteolum (strain DSM 273 / BCRC 81028 / 2530) (Pelodictyon luteolum) protein is Small ribosomal subunit protein uS8.